Consider the following 277-residue polypeptide: MEIRYATNPRDFKNYDNERVREDFLINNLFEKGNINMVYSHYDRLIVGGAVPTNSPLHLEDKETLKTEYFLERREVGFFNISNNKGKITVDGEVYELDHRDCLYVGKENKNILIESIDSDNPARFYIVSATAHKNYPTQKKSLQEATHRHLGDDSQSNKRDLYQYIHADGIQSCQLMMGMTFLSENNMWNTMPPHIHDRRMEAYLYFDIDEDEKIMHFMGQPNDTRNIVVSNEQAVLSPPWSIHSGVGTKNYTFIWAMAGENYTFDDMDHVVKNQLK.

Zn(2+) contacts are provided by His-195, His-197, Glu-202, and His-244.

It belongs to the KduI family. It depends on Zn(2+) as a cofactor.

The enzyme catalyses 5-dehydro-4-deoxy-D-glucuronate = 3-deoxy-D-glycero-2,5-hexodiulosonate. Its pathway is glycan metabolism; pectin degradation; 2-dehydro-3-deoxy-D-gluconate from pectin: step 4/5. In terms of biological role, catalyzes the isomerization of 5-dehydro-4-deoxy-D-glucuronate to 3-deoxy-D-glycero-2,5-hexodiulosonate. The sequence is that of 4-deoxy-L-threo-5-hexosulose-uronate ketol-isomerase from Oceanobacillus iheyensis (strain DSM 14371 / CIP 107618 / JCM 11309 / KCTC 3954 / HTE831).